The sequence spans 425 residues: CinA-like protein (425 aa).

Belongs to the CinA family.

This chain is CinA-like protein, found in Shewanella sp. (strain MR-4).